The sequence spans 1354 residues: Phosphoribosylformylglycinamidine synthase (1354 aa).

Residues 327 to 338 (GATTGTGGRLRD), 407 to 409 (SGF), and Ala714 each bind ATP. Mg(2+) is bound by residues Asp715, Glu754, Asn758, and Asp918. An ATP-binding site is contributed by Ser920. One can recognise a Glutamine amidotransferase type-1 domain in the interval 1087–1337 (VAVLREEGVN…EVSPTQSESP (251 aa)). Cys1180 functions as the Nucleophile in the catalytic mechanism. Catalysis depends on residues His1310 and Glu1312.

The protein in the N-terminal section; belongs to the FGAMS family.

It carries out the reaction N(2)-formyl-N(1)-(5-phospho-beta-D-ribosyl)glycinamide + L-glutamine + ATP + H2O = 2-formamido-N(1)-(5-O-phospho-beta-D-ribosyl)acetamidine + L-glutamate + ADP + phosphate + H(+). The protein operates within purine metabolism; IMP biosynthesis via de novo pathway; 5-amino-1-(5-phospho-D-ribosyl)imidazole from N(2)-formyl-N(1)-(5-phospho-D-ribosyl)glycinamide: step 1/2. Functionally, phosphoribosylformylglycinamidine synthase involved in the purines biosynthetic pathway. Catalyzes the ATP-dependent conversion of formylglycinamide ribonucleotide (FGAR) and glutamine to yield formylglycinamidine ribonucleotide (FGAM) and glutamate. Because of its role in metabolisms, is involved in sleep regulation. This chain is Phosphoribosylformylglycinamidine synthase, found in Drosophila melanogaster (Fruit fly).